A 165-amino-acid polypeptide reads, in one-letter code: Transcription antitermination protein NusB (165 aa).

Belongs to the NusB family.

Functionally, involved in transcription antitermination. Required for transcription of ribosomal RNA (rRNA) genes. Binds specifically to the boxA antiterminator sequence of the ribosomal RNA (rrn) operons. This is Transcription antitermination protein NusB from Chlorobium phaeobacteroides (strain DSM 266 / SMG 266 / 2430).